A 283-amino-acid polypeptide reads, in one-letter code: 4-diphosphocytidyl-2-C-methyl-D-erythritol kinase (283 aa).

K10 is a catalytic residue. 99–109 serves as a coordination point for ATP; the sequence is PMGGGLGGGSS. The active site involves D141.

It belongs to the GHMP kinase family. IspE subfamily. As to quaternary structure, homodimer.

It catalyses the reaction 4-CDP-2-C-methyl-D-erythritol + ATP = 4-CDP-2-C-methyl-D-erythritol 2-phosphate + ADP + H(+). It participates in isoprenoid biosynthesis; isopentenyl diphosphate biosynthesis via DXP pathway; isopentenyl diphosphate from 1-deoxy-D-xylulose 5-phosphate: step 3/6. Catalyzes the phosphorylation of the position 2 hydroxy group of 4-diphosphocytidyl-2C-methyl-D-erythritol. The sequence is that of 4-diphosphocytidyl-2-C-methyl-D-erythritol kinase from Escherichia coli O157:H7 (strain EC4115 / EHEC).